Reading from the N-terminus, the 278-residue chain is Phosphonates import ATP-binding protein PhnC 1 (278 aa).

An ABC transporter domain is found at 5 to 253; that stretch reads IRVDSLNKTF…FLNELYGAEG (249 aa). 37–44 contacts ATP; sequence GASGSGKS.

It belongs to the ABC transporter superfamily. Phosphonates importer (TC 3.A.1.9.1) family. As to quaternary structure, the complex is composed of two ATP-binding proteins (PhnC), two transmembrane proteins (PhnE) and a solute-binding protein (PhnD).

It is found in the cell inner membrane. It carries out the reaction phosphonate(out) + ATP + H2O = phosphonate(in) + ADP + phosphate + H(+). Functionally, part of the ABC transporter complex PhnCDE involved in phosphonates import. Responsible for energy coupling to the transport system. This Pseudomonas aeruginosa (strain UCBPP-PA14) protein is Phosphonates import ATP-binding protein PhnC 1.